The primary structure comprises 463 residues: ATP-dependent rRNA helicase SPB4 (463 aa).

The Q motif motif lies at 4 to 32; it reads KGIEDVAMNGRLKKEIEENGFGKMTEVQL. The Helicase ATP-binding domain maps to 35-205; sequence IPEVLKGKDV…RVFLRNPVSI (171 aa). 48–55 is an ATP binding site; that stretch reads SPTGTGKT. The DEAD box signature appears at 153–156; it reads DEAD. Residues 226 to 382 enclose the Helicase C-terminal domain; the sequence is KLLVLMDIVT…DIKSMISPEL (157 aa). A disordered region spans residues 444–463; that stretch reads RDGKKRALPKKKYRKKRAIK. The span at 446-463 shows a compositional bias: basic residues; that stretch reads GKKRALPKKKYRKKRAIK.

The protein belongs to the DEAD box helicase family. DDX55/SPB4 subfamily. In terms of assembly, component of pre-60S ribosomal complexes.

The protein localises to the nucleus. Its subcellular location is the nucleolus. The enzyme catalyses ATP + H2O = ADP + phosphate + H(+). Functionally, ATP-binding RNA helicase involved in the biogenesis of 60S ribosomal subunits. Binds 90S pre-ribosomal particles and dissociates from pre-60S ribosomal particles after processing of 27SB pre-rRNA. Required for the normal formation of 18S rRNA through the processing of pre-rRNAs at sites A0, A1 and A2, and the normal formation of 25S and 5.8S rRNAs through the processing of pre-rRNAs at sites C1 and C2. The chain is ATP-dependent rRNA helicase SPB4 from Encephalitozoon cuniculi (strain GB-M1) (Microsporidian parasite).